A 348-amino-acid chain; its full sequence is Caricain (348 aa).

The first 16 residues, 1–16 (MAMIPSISKLLFVAIC), serve as a signal peptide directing secretion. Positions 17–132 (LFVHMSVSFG…EEFINEDTVN (116 aa)) are cleaved as a propeptide — activation peptide. N86 carries N-linked (GlcNAc...) asparagine glycosylation. 3 disulfide bridges follow: C154–C195, C188–C227, and C285–C336. C157 is a catalytic residue. C157 is a binding site for E64. Active-site residues include H291 and N311.

Belongs to the peptidase C1 family. Monomer.

The enzyme catalyses Hydrolysis of proteins with broad specificity for peptide bonds, similar to those of papain and chymopapain.. Its activity is regulated as follows. Repressed by the active-site-directed cysteine protease inhibitor E64 (L-trans-epoxysuccinyl-leucylamide-(4-guanido)-butane) produced by Aspergillus japonicus. Functionally, cysteine proteinase with a high level of diversity in substrate specificity. The protein is Caricain of Carica papaya (Papaya).